The following is a 208-amino-acid chain: Large ribosomal subunit protein uL3 (208 aa).

Q149 bears the N5-methylglutamine mark.

It belongs to the universal ribosomal protein uL3 family. In terms of assembly, part of the 50S ribosomal subunit. Forms a cluster with proteins L14 and L19. In terms of processing, methylated by PrmB.

Its function is as follows. One of the primary rRNA binding proteins, it binds directly near the 3'-end of the 23S rRNA, where it nucleates assembly of the 50S subunit. The polypeptide is Large ribosomal subunit protein uL3 (Actinobacillus pleuropneumoniae serotype 5b (strain L20)).